The sequence spans 592 residues: Methionine--tRNA ligase (592 aa).

Positions Pro12–His22 match the 'HIGH' region motif. The Zn(2+) site is built by Cys144, Cys147, Cys157, and Cys160. A 'KMSKS' region motif is present at residues Lys342–Ser346. Position 345 (Thr345) interacts with ATP.

This sequence belongs to the class-I aminoacyl-tRNA synthetase family. MetG type 1 subfamily. As to quaternary structure, monomer. Zn(2+) is required as a cofactor.

It is found in the cytoplasm. The enzyme catalyses tRNA(Met) + L-methionine + ATP = L-methionyl-tRNA(Met) + AMP + diphosphate. Is required not only for elongation of protein synthesis but also for the initiation of all mRNA translation through initiator tRNA(fMet) aminoacylation. This is Methionine--tRNA ligase from Roseiflexus sp. (strain RS-1).